Here is a 77-residue protein sequence, read N- to C-terminus: Major outer membrane lipoprotein Lpp (77 aa).

The first 19 residues, 1–19, serve as a signal peptide directing secretion; the sequence is MNRTKLVLGAVILGSHSAG. A lipid anchor (N-palmitoyl cysteine) is attached at Cys-20. A lipid anchor (S-diacylglycerol cysteine) is attached at Cys-20. Repeats lie at residues 23-33 and 37-47; these read NAKIDQLSSDV and NAKVDQLSNDV. Positions 26 to 74 form a coiled coil; that stretch reads IDQLSSDVQTLNAKVDQLSNDVNAMRSDVQAAKDDAARANQRLDNQAHA. Positions 56 to 77 are disordered; that stretch reads AAKDDAARANQRLDNQAHAYKK. Lys-77 carries the post-translational modification N6-murein peptidoglycan lysine.

This sequence belongs to the Lpp family. In terms of assembly, homotrimer.

It localises to the cell outer membrane. The protein localises to the secreted. It is found in the cell wall. In terms of biological role, a highly abundant outer membrane lipoprotein that controls the distance between the inner and outer membranes. The only protein known to be covalently linked to the peptidoglycan network (PGN). Also non-covalently binds the PGN. The link between the cell outer membrane and PGN contributes to maintenance of the structural and functional integrity of the cell envelope, and maintains the correct distance between the PGN and the outer membrane. In Serratia marcescens, this protein is Major outer membrane lipoprotein Lpp.